The primary structure comprises 163 residues: F-box protein At2g35280 (163 aa).

The 50-residue stretch at 8-57 (ISRLEALPQDLLREIVAKIGVKSAEDYHNCILSCKELGASANDERVLKTL) folds into the F-box domain.

The protein is F-box protein At2g35280 of Arabidopsis thaliana (Mouse-ear cress).